Here is a 256-residue protein sequence, read N- to C-terminus: Cysteine-rich repeat secretory protein 42 (256 aa).

A signal peptide spans 1–26 (MSSVFGSVHILAMIAIQLLLTHSVSS). Gnk2-homologous domains lie at 33 to 136 (YLHH…SVAS) and 142 to 253 (YEND…LYPF).

Belongs to the cysteine-rich repeat secretory protein family.

The protein localises to the secreted. The protein is Cysteine-rich repeat secretory protein 42 (CRRSP42) of Arabidopsis thaliana (Mouse-ear cress).